A 310-amino-acid chain; its full sequence is N-acetyl-gamma-glutamyl-phosphate reductase (310 aa).

C117 is an active-site residue.

It belongs to the NAGSA dehydrogenase family. Type 2 subfamily.

Its subcellular location is the cytoplasm. The enzyme catalyses N-acetyl-L-glutamate 5-semialdehyde + phosphate + NADP(+) = N-acetyl-L-glutamyl 5-phosphate + NADPH + H(+). It participates in amino-acid biosynthesis; L-arginine biosynthesis; N(2)-acetyl-L-ornithine from L-glutamate: step 3/4. Functionally, catalyzes the NADPH-dependent reduction of N-acetyl-5-glutamyl phosphate to yield N-acetyl-L-glutamate 5-semialdehyde. This Rhizobium leguminosarum bv. trifolii (strain WSM2304) protein is N-acetyl-gamma-glutamyl-phosphate reductase.